Here is a 224-residue protein sequence, read N- to C-terminus: MKWYLVALSGLLLSGCVVQQTEVVSPSFDQQLKSPAPNYSNGSIWQASSIGLTEDGKARRVGDIVTIIVTETASASKQAATATGRSSQISAGIPNMLGLEESKIITSNFADLSKLLNASASSKFDGSGSTSRKETLSATISAKVIDVLPNSNLKIEGRRNVRVNNEDQIVTVKGTIRQRDITAENTINSIYVADAQISYAGEGIISDRQKPGWLMNVLDKLWPF.

The first 15 residues, 1-15, serve as a signal peptide directing secretion; it reads MKWYLVALSGLLLSG. Residue Cys-16 is the site of N-palmitoyl cysteine attachment. A lipid anchor (S-diacylglycerol cysteine) is attached at Cys-16.

The protein belongs to the FlgH family. In terms of assembly, the basal body constitutes a major portion of the flagellar organelle and consists of four rings (L,P,S, and M) mounted on a central rod.

It localises to the cell outer membrane. Its subcellular location is the bacterial flagellum basal body. In terms of biological role, assembles around the rod to form the L-ring and probably protects the motor/basal body from shearing forces during rotation. The chain is Flagellar L-ring protein from Trichlorobacter lovleyi (strain ATCC BAA-1151 / DSM 17278 / SZ) (Geobacter lovleyi).